Here is a 208-residue protein sequence, read N- to C-terminus: Uracil phosphoribosyltransferase (208 aa).

5-phospho-alpha-D-ribose 1-diphosphate contacts are provided by residues Arg78, Arg103, and 130-138 (DPMLATGGS). Uracil contacts are provided by residues Ile193 and 198-200 (GDA). Asp199 contacts 5-phospho-alpha-D-ribose 1-diphosphate.

This sequence belongs to the UPRTase family. Requires Mg(2+) as cofactor.

The catalysed reaction is UMP + diphosphate = 5-phospho-alpha-D-ribose 1-diphosphate + uracil. The protein operates within pyrimidine metabolism; UMP biosynthesis via salvage pathway; UMP from uracil: step 1/1. With respect to regulation, allosterically activated by GTP. Catalyzes the conversion of uracil and 5-phospho-alpha-D-ribose 1-diphosphate (PRPP) to UMP and diphosphate. The sequence is that of Uracil phosphoribosyltransferase from Roseiflexus sp. (strain RS-1).